The sequence spans 132 residues: Small ribosomal subunit protein uS8c (132 aa).

Belongs to the universal ribosomal protein uS8 family. As to quaternary structure, part of the 30S ribosomal subunit.

The protein localises to the plastid. The protein resides in the chloroplast. One of the primary rRNA binding proteins, it binds directly to 16S rRNA central domain where it helps coordinate assembly of the platform of the 30S subunit. The sequence is that of Small ribosomal subunit protein uS8c (rps8) from Chaetosphaeridium globosum (Charophycean green alga).